The primary structure comprises 891 residues: MAPVPDPNSVGGGAKRDEATTKIPSKDSKKKDDKKEEDLSEEDLQLKQNLELYVERVQDPNPELQKIALESMRKEIRDSTSSMTSVPKPLKFLRPHYGVLKEFHAKMAESDLKKMLADILSVLALTMSAEGERESLNYRLNGSESDIGSWGHEYVRNLAGEIAKEYTIRQGEESSIEDLMDLVQQIVSFHMKHNAETEAVDLLMDVEDLDLLLEHVDNTNFRRTCNYLTSAAKYLPGPDDMLVLDIAYMIYIKFAEYPNALQIALFLDNMQYVKQVFTSCTDLVKKKQFCYMIARHGMTFELDQEMVANDEDKEALQDIVNNSKLSEGYLTLARDIEVMEAKTPEDIYKAHLLDGRASSGPSVDSARQNLSATFVNAFVNAGFGQDKLMTVPSDSTSGSAGNWLFKNKEHGKTSAVASLGMIQLWDVETGLGHLDKYFHSNDNPVVAGALLGVGIVNCGIKNDCDPAFALLSGYIDNEDSSVRIGAIMGLGIAYAGSQNDQIKIRLSPILNDANAPLDVIAFAALSLGMIYVGSCNEEVAQSIIFALMDRSEAELGEALTRFLPLGLGLLYLGKQESVEATAEVSKTFNEKIRKYCDMTLLSCAYAGTGNVLKVQDLLAQCGEHLVKGDIHQGPAVIGLAMVAMSEELGLDMEIRSLERVLQYGEQNIRRAVPLALGLLCISNPKVTVMDTLSRLSHDTDSEVAMAAIISLGLIGAGTNNARIAGMLRNLSSYYYKDASLLFCVRIAQGFVHMGKGLLTLNPFHSERLLLSPTALAGIVTLLHACLDMKSIILGKYHYVLYFLVLAMQPRMMLTVDQSLKPISVPVRVGQAVDVVGQAGRPKTITGFQTHSTPVLLAAGERAELATEKYIPLSPILEGFVILKENPDYREE.

Residues 1-43 (MAPVPDPNSVGGGAKRDEATTKIPSKDSKKKDDKKEEDLSEED) are disordered. Positions 14–37 (AKRDEATTKIPSKDSKKKDDKKEE) are enriched in basic and acidic residues. PC repeat units follow at residues 414-447 (SAVA…PVVA), 448-484 (GALL…SVRI), 485-519 (GAIM…PLDV), 522-556 (FAAL…AELG), 565-594 (LGLG…KIRK), 674-705 (LALG…EVAM), and 724-739 (AGML…KDAS).

This sequence belongs to the proteasome subunit S2 family. As to quaternary structure, component of the 19S regulatory particle (RP/PA700) base subcomplex of the 26S proteasome. The 26S proteasome is composed of a core protease (CP), known as the 20S proteasome, capped at one or both ends by the 19S regulatory particle (RP/PA700). The RP/PA700 complex is composed of at least 17 different subunits in two subcomplexes, the base and the lid, which form the portions proximal and distal to the 20S proteolytic core, respectively. Ubiquitinated. Expressed in stems, leaves, buds, flowers, siliques and developing seeds.

Functionally, acts as a regulatory subunit of the 26 proteasome which is involved in the ATP-dependent degradation of ubiquitinated proteins. This chain is 26S proteasome non-ATPase regulatory subunit 2 homolog B (RPN1B), found in Arabidopsis thaliana (Mouse-ear cress).